Reading from the N-terminus, the 149-residue chain is Small ribosomal subunit protein uS13 (149 aa).

The protein belongs to the universal ribosomal protein uS13 family. In terms of assembly, part of the 30S ribosomal subunit. Forms a loose heterodimer with protein S19. Forms two bridges to the 50S subunit in the 70S ribosome.

Functionally, located at the top of the head of the 30S subunit, it contacts several helices of the 16S rRNA. In the 70S ribosome it contacts the 23S rRNA (bridge B1a) and protein L5 of the 50S subunit (bridge B1b), connecting the 2 subunits; these bridges are implicated in subunit movement. This Methanococcus maripaludis (strain DSM 14266 / JCM 13030 / NBRC 101832 / S2 / LL) protein is Small ribosomal subunit protein uS13.